Reading from the N-terminus, the 175-residue chain is uncharacterized protein (175 aa).

The DNL-type zinc-finger motif lies at 71-166; it reads QPKPTYNVSF…KPPQFKIRPA (96 aa). Zn(2+) contacts are provided by Cys82, Cys85, Cys107, and Cys110.

This is an uncharacterized protein from Schizosaccharomyces pombe (strain 972 / ATCC 24843) (Fission yeast).